Consider the following 351-residue polypeptide: Inactive RHOMBOID-like protein 8 (351 aa).

7 consecutive transmembrane segments (helical) span residues 48–68 (TWLV…TMGV), 130–150 (WLHS…FVGI), 160–180 (RIAV…VLFV), 183–203 (IPSI…LSAL), 216–236 (ALAI…LPFI), 239–259 (FANI…LFKP), and 294–314 (IICL…ACWG).

It belongs to the peptidase S54 family. As to expression, expressed in pollen mother cell.

Its subcellular location is the golgi apparatus membrane. Its function is as follows. Probable inactive rhomboid-type serine protease. Functionally, probably essential for the meiosis stage-specific callose accumulation and pollen exine formation. This Arabidopsis thaliana (Mouse-ear cress) protein is Inactive RHOMBOID-like protein 8.